The chain runs to 207 residues: ATP-dependent Clp protease proteolytic subunit 1 (207 aa).

The active-site Nucleophile is the Ser-103. His-128 is an active-site residue.

The protein belongs to the peptidase S14 family. In terms of assembly, fourteen ClpP subunits assemble into 2 heptameric rings which stack back to back to give a disk-like structure with a central cavity, resembling the structure of eukaryotic proteasomes.

Its subcellular location is the cytoplasm. It carries out the reaction Hydrolysis of proteins to small peptides in the presence of ATP and magnesium. alpha-casein is the usual test substrate. In the absence of ATP, only oligopeptides shorter than five residues are hydrolyzed (such as succinyl-Leu-Tyr-|-NHMec, and Leu-Tyr-Leu-|-Tyr-Trp, in which cleavage of the -Tyr-|-Leu- and -Tyr-|-Trp bonds also occurs).. Its function is as follows. Cleaves peptides in various proteins in a process that requires ATP hydrolysis. Has a chymotrypsin-like activity. Plays a major role in the degradation of misfolded proteins. This chain is ATP-dependent Clp protease proteolytic subunit 1, found in Tropheryma whipplei (strain Twist) (Whipple's bacillus).